A 211-amino-acid chain; its full sequence is Small ribosomal subunit protein eS1 (211 aa).

Belongs to the eukaryotic ribosomal protein eS1 family.

This Methanothrix thermoacetophila (strain DSM 6194 / JCM 14653 / NBRC 101360 / PT) (Methanosaeta thermophila) protein is Small ribosomal subunit protein eS1.